Consider the following 619-residue polypeptide: Chaperone protein DnaK (619 aa).

Residue Thr-175 is modified to Phosphothreonine; by autocatalysis. The disordered stretch occupies residues 578-619 (NGGAQGQGFDPNNMGGANAGAGATNNNDDNVVDADFEVQDDK). Residues 589–606 (NNMGGANAGAGATNNNDD) show a composition bias toward low complexity. Acidic residues predominate over residues 607–619 (NVVDADFEVQDDK).

This sequence belongs to the heat shock protein 70 family.

Acts as a chaperone. The polypeptide is Chaperone protein DnaK (Clostridium perfringens (strain ATCC 13124 / DSM 756 / JCM 1290 / NCIMB 6125 / NCTC 8237 / Type A)).